We begin with the raw amino-acid sequence, 288 residues long: 33 kDa chaperonin (288 aa).

2 cysteine pairs are disulfide-bonded: Cys-236-Cys-238 and Cys-269-Cys-272.

The protein belongs to the HSP33 family. Post-translationally, under oxidizing conditions two disulfide bonds are formed involving the reactive cysteines. Under reducing conditions zinc is bound to the reactive cysteines and the protein is inactive.

The protein resides in the cytoplasm. Its function is as follows. Redox regulated molecular chaperone. Protects both thermally unfolding and oxidatively damaged proteins from irreversible aggregation. Plays an important role in the bacterial defense system toward oxidative stress. The protein is 33 kDa chaperonin of Lactococcus lactis subsp. lactis (strain IL1403) (Streptococcus lactis).